The following is a 90-amino-acid chain: Large ribosomal subunit protein eL34 (90 aa).

Zn(2+)-binding residues include Cys-36, Cys-39, Cys-72, and Cys-75. The segment at 41-72 (RPLNGVPRGRPSELRKLPKTKKRPERPYPNLC) is disordered.

This sequence belongs to the eukaryotic ribosomal protein eL34 family. Part of the 50S ribosomal subunit. It depends on Zn(2+) as a cofactor.

The sequence is that of Large ribosomal subunit protein eL34 from Thermococcus kodakarensis (strain ATCC BAA-918 / JCM 12380 / KOD1) (Pyrococcus kodakaraensis (strain KOD1)).